The sequence spans 478 residues: ATP synthase subunit beta (478 aa).

158 to 165 (GGAGVGKT) is an ATP binding site.

The protein belongs to the ATPase alpha/beta chains family. F-type ATPases have 2 components, CF(1) - the catalytic core - and CF(0) - the membrane proton channel. CF(1) has five subunits: alpha(3), beta(3), gamma(1), delta(1), epsilon(1). CF(0) has three main subunits: a(1), b(2) and c(9-12). The alpha and beta chains form an alternating ring which encloses part of the gamma chain. CF(1) is attached to CF(0) by a central stalk formed by the gamma and epsilon chains, while a peripheral stalk is formed by the delta and b chains.

It localises to the cell inner membrane. The enzyme catalyses ATP + H2O + 4 H(+)(in) = ADP + phosphate + 5 H(+)(out). Its function is as follows. Produces ATP from ADP in the presence of a proton gradient across the membrane. The catalytic sites are hosted primarily by the beta subunits. The sequence is that of ATP synthase subunit beta from Rhizobium leguminosarum bv. trifolii (strain WSM2304).